A 580-amino-acid polypeptide reads, in one-letter code: N(6)-adenosine-methyltransferase catalytic subunit METTL3 (580 aa).

Residues 1 to 70 form a disordered region; it reads MSDTWSSIQA…PKPSTASAVP (70 aa). Ser2 carries the N-acetylserine; alternate modification. At Ser2 the chain carries Phosphoserine; alternate. Basic and acidic residues predominate over residues 28–37; it reads QDSGHLDLRN. Phosphoserine is present on residues Ser43, Ser48, and Ser50. Residues Lys177, Lys211, Lys212, and Lys215 each participate in a glycyl lysine isopeptide (Lys-Gly) (interchain with G-Cter in SUMO1) cross-link. The segment at 198–219 is disordered; the sequence is LNSSASEPAKEPAKKSRKHAAS. Residues 210 to 215 carry the Nuclear localization signal motif; the sequence is AKKSRK. Phosphoserine occurs at positions 219 and 243. Thr348 is modified (phosphothreonine). Ser350 is subject to Phosphoserine. S-adenosyl-L-methionine is bound by residues 377–378 and Asp395; that span reads DI. Residues 396–410 form a gate loop 1 region; that stretch reads PPWDIHMELPYGTLT. Interaction with METTL14 stretches follow at residues 450-454 and 464-480; these read ERVDE and QRII…NHGK. Positions 462–479 are interphase loop; the sequence is QLQRIIRTGRTGHWLNHG. The tract at residues 465–478 is positively charged region required for RNA-binding; that stretch reads RIIRTGRTGHWLNH. The interval 507–515 is gate loop 2; that stretch reads VRSTSHKPD. Residues Lys513, 536–539, and 549–550 each bind S-adenosyl-L-methionine; these read RPHN and NQ.

It belongs to the MT-A70-like family. Heterodimer; heterodimerizes with METTL14 to form an antiparallel heterodimer that constitutes an active methyltransferase. Component of the WMM complex, a N6-methyltransferase complex composed of a catalytic subcomplex, named MAC, and of an associated subcomplex, named MACOM. The MAC subcomplex is composed of METTL3 and METTL14. The MACOM subcomplex is composed of WTAP, ZC3H13, CBLL1/HAKAI, VIRMA, and, in some cases of RBM15 (RBM15 or RBM15B). Interacts with NCBP1/CBP80. Interacts with EIF4E. Interacts with EIF3B. Post-translationally, sumoylation inhibits the N6-adenosine-methyltransferase activity. Sumoylation does not affect subcellular location or interaction with METTL14. Desumoylated by SENP1. As to expression, widely expressed at low level. Expressed in spleen, thymus, prostate, testis, ovary, small intestine, colon and peripheral blood leukocytes.

The protein localises to the nucleus. The protein resides in the nucleus speckle. It is found in the cytoplasm. The enzyme catalyses an adenosine in mRNA + S-adenosyl-L-methionine = an N(6)-methyladenosine in mRNA + S-adenosyl-L-homocysteine + H(+). Methyltransferase activity is regulated by miRNAs via a sequence pairing mechanism. Methyltransferase activity is inhibited by sumoylation. The METTL3-METTL14 heterodimer forms a N6-methyltransferase complex that methylates adenosine residues at the N(6) position of some RNAs and regulates various processes such as the circadian clock, differentiation of embryonic and hematopoietic stem cells, cortical neurogenesis, response to DNA damage, differentiation of T-cells and primary miRNA processing. In the heterodimer formed with METTL14, METTL3 constitutes the catalytic core. N6-methyladenosine (m6A), which takes place at the 5'-[AG]GAC-3' consensus sites of some mRNAs, plays a role in mRNA stability, processing, translation efficiency and editing. M6A acts as a key regulator of mRNA stability: methylation is completed upon the release of mRNA into the nucleoplasm and promotes mRNA destabilization and degradation. In embryonic stem cells (ESCs), m6A methylation of mRNAs encoding key naive pluripotency-promoting transcripts results in transcript destabilization, promoting differentiation of ESCs. M6A regulates the length of the circadian clock: acts as an early pace-setter in the circadian loop by putting mRNA production on a fast-track for facilitating nuclear processing, thereby providing an early point of control in setting the dynamics of the feedback loop. M6A also regulates circadian regulation of hepatic lipid metabolism. M6A regulates spermatogonial differentiation and meiosis and is essential for male fertility and spermatogenesis. Also required for oogenesis. Involved in the response to DNA damage: in response to ultraviolet irradiation, METTL3 rapidly catalyzes the formation of m6A on poly(A) transcripts at DNA damage sites, leading to the recruitment of POLK to DNA damage sites. M6A is also required for T-cell homeostasis and differentiation: m6A methylation of transcripts of SOCS family members (SOCS1, SOCS3 and CISH) in naive T-cells promotes mRNA destabilization and degradation, promoting T-cell differentiation. Inhibits the type I interferon response by mediating m6A methylation of IFNB. M6A also takes place in other RNA molecules, such as primary miRNA (pri-miRNAs). Mediates m6A methylation of Xist RNA, thereby participating in random X inactivation: m6A methylation of Xist leads to target YTHDC1 reader on Xist and promote transcription repression activity of Xist. M6A also regulates cortical neurogenesis: m6A methylation of transcripts related to transcription factors, neural stem cells, the cell cycle and neuronal differentiation during brain development promotes their destabilization and decay, promoting differentiation of radial glial cells. METTL3 mediates methylation of pri-miRNAs, marking them for recognition and processing by DGCR8. Acts as a positive regulator of mRNA translation independently of the methyltransferase activity: promotes translation by interacting with the translation initiation machinery in the cytoplasm. Its overexpression in a number of cancer cells suggests that it may participate in cancer cell proliferation by promoting mRNA translation. During human coronavirus SARS-CoV-2 infection, adds m6A modifications in SARS-CoV-2 RNA leading to decreased RIGI binding and subsequently dampening the sensing and activation of innate immune responses. This Homo sapiens (Human) protein is N(6)-adenosine-methyltransferase catalytic subunit METTL3.